A 621-amino-acid chain; its full sequence is 1-deoxy-D-xylulose-5-phosphate synthase (621 aa).

Residues histidine 80 and 121–123 (GHS) each bind thiamine diphosphate. Aspartate 152 serves as a coordination point for Mg(2+). Thiamine diphosphate-binding positions include 153–154 (GA), asparagine 181, tyrosine 288, and glutamate 370. Asparagine 181 contacts Mg(2+).

This sequence belongs to the transketolase family. DXPS subfamily. In terms of assembly, homodimer. Requires Mg(2+) as cofactor. The cofactor is thiamine diphosphate.

It catalyses the reaction D-glyceraldehyde 3-phosphate + pyruvate + H(+) = 1-deoxy-D-xylulose 5-phosphate + CO2. It participates in metabolic intermediate biosynthesis; 1-deoxy-D-xylulose 5-phosphate biosynthesis; 1-deoxy-D-xylulose 5-phosphate from D-glyceraldehyde 3-phosphate and pyruvate: step 1/1. Functionally, catalyzes the acyloin condensation reaction between C atoms 2 and 3 of pyruvate and glyceraldehyde 3-phosphate to yield 1-deoxy-D-xylulose-5-phosphate (DXP). The sequence is that of 1-deoxy-D-xylulose-5-phosphate synthase from Pseudoalteromonas atlantica (strain T6c / ATCC BAA-1087).